The following is a 242-amino-acid chain: Polycomb group RING finger protein 3 (242 aa).

The RING-type zinc-finger motif lies at 17 to 56; that stretch reads CRLCNGYLIDATTVTECLHTFCRSCLVKYLEENNTCPTCR. Residues 120-149 form a disordered region; sequence EAHRNGETKTDEHTHKEPPEEKQEEDHDYH.

In terms of assembly, component of a PRC1-like complex.

Its subcellular location is the nucleus. Its function is as follows. Component of a Polycomb group (PcG) multiprotein PRC1-like complex, a complex class required to maintain the transcriptionally repressive state of many genes, including Hox genes, throughout development. PcG PRC1 complex acts via chromatin remodeling and modification of histones; it mediates monoubiquitination of histone H2A 'Lys-119', rendering chromatin heritably changed in its expressibility. Within the PRC1-like complex, regulates RNF2 ubiquitin ligase activity. This is Polycomb group RING finger protein 3 (pcgf3) from Xenopus tropicalis (Western clawed frog).